The primary structure comprises 586 residues: uncharacterized protein (586 aa).

2 disordered regions span residues 17 to 64 (VRRT…ETEE) and 80 to 123 (HSCS…GGAN). The span at 28 to 37 (PSTSGSIAWT) shows a compositional bias: polar residues. Composition is skewed to low complexity over residues 38 to 52 (SSES…VSSS) and 80 to 91 (HSCSAATTSQQS). Positions 94–110 (QSKEHRIGGIKKEEKPI) are enriched in basic and acidic residues. Residues 112 to 123 (MGGGSSENGGAN) show a composition bias toward gly residues. Helical transmembrane passes span 151–171 (WVIL…WIQY), 191–211 (WTSM…AWLL), 218–238 (LSVL…LLST), 243–263 (FWVT…TLGI), 283–303 (LGVF…PLIV), 317–337 (TLFL…ICFF), 375–395 (FVIL…ISTL), 413–433 (YVGL…GFIL), 441–461 (LTTI…TLTI), 466–486 (MVLV…YLPI), 513–533 (IFGI…GTFT), and 536–556 (IIMS…REDL).

The protein belongs to the major facilitator superfamily. Feline leukemia virus subgroup C receptor (TC 2.A.1.28.1) family.

Its subcellular location is the membrane. This is an uncharacterized protein from Caenorhabditis elegans.